The chain runs to 79 residues: Small ribosomal subunit protein uS17 (79 aa).

This sequence belongs to the universal ribosomal protein uS17 family. In terms of assembly, part of the 30S ribosomal subunit.

In terms of biological role, one of the primary rRNA binding proteins, it binds specifically to the 5'-end of 16S ribosomal RNA. In Rhizobium etli (strain CIAT 652), this protein is Small ribosomal subunit protein uS17.